The primary structure comprises 283 residues: Pantothenate synthetase (283 aa).

ATP is bound at residue 31 to 38 (MGALHDGH). Residue H38 is the Proton donor of the active site. Position 62 (Q62) interacts with (R)-pantoate. Q62 contacts beta-alanine. Residue 148-151 (GKKD) coordinates ATP. (R)-pantoate is bound at residue Q154. Residues V177 and 185–188 (KSSR) each bind ATP.

It belongs to the pantothenate synthetase family. Homodimer.

It localises to the cytoplasm. The catalysed reaction is (R)-pantoate + beta-alanine + ATP = (R)-pantothenate + AMP + diphosphate + H(+). Its pathway is cofactor biosynthesis; (R)-pantothenate biosynthesis; (R)-pantothenate from (R)-pantoate and beta-alanine: step 1/1. Its function is as follows. Catalyzes the condensation of pantoate with beta-alanine in an ATP-dependent reaction via a pantoyl-adenylate intermediate. The chain is Pantothenate synthetase from Staphylococcus aureus (strain USA300).